Here is a 339-residue protein sequence, read N- to C-terminus: DNA-directed RNA polymerase subunit alpha (339 aa).

The segment at 1–238 (MVDPIVTKNW…EQLSIFINFD (238 aa)) is alpha N-terminal domain (alpha-NTD). The interval 255–339 (LNENLFRSVD…KAAPQGAPKV (85 aa)) is alpha C-terminal domain (alpha-CTD).

The protein belongs to the RNA polymerase alpha chain family. As to quaternary structure, homodimer. The RNAP catalytic core consists of 2 alpha, 1 beta, 1 beta' and 1 omega subunit. When a sigma factor is associated with the core the holoenzyme is formed, which can initiate transcription.

The catalysed reaction is RNA(n) + a ribonucleoside 5'-triphosphate = RNA(n+1) + diphosphate. In terms of biological role, DNA-dependent RNA polymerase catalyzes the transcription of DNA into RNA using the four ribonucleoside triphosphates as substrates. The protein is DNA-directed RNA polymerase subunit alpha of Anaeromyxobacter sp. (strain Fw109-5).